The sequence spans 58 residues: Small ribosomal subunit protein bS21 (58 aa).

Residues 28-58 (VLQDIRKHEHYEKPSIKKKKKSEAARKKKRF) are disordered. Residues 31–42 (DIRKHEHYEKPS) show a composition bias toward basic and acidic residues. A compositionally biased stretch (basic residues) spans 43 to 58 (IKKKKKSEAARKKKRF).

The protein belongs to the bacterial ribosomal protein bS21 family.

This chain is Small ribosomal subunit protein bS21, found in Syntrophomonas wolfei subsp. wolfei (strain DSM 2245B / Goettingen).